We begin with the raw amino-acid sequence, 359 residues long: Queuine tRNA-ribosyltransferase (359 aa).

Asp-92 acts as the Proton acceptor in catalysis. Substrate is bound by residues Asp-92–Phe-96, Asp-146, Gln-189, and Gly-216. The interval Gly-245–Asp-251 is RNA binding. Asp-264 acts as the Nucleophile in catalysis. The tract at residues Thr-269–Arg-273 is RNA binding; important for wobble base 34 recognition. Residues Cys-302, Cys-304, Cys-307, and His-333 each contribute to the Zn(2+) site.

This sequence belongs to the queuine tRNA-ribosyltransferase family. In terms of assembly, homodimer. Within each dimer, one monomer is responsible for RNA recognition and catalysis, while the other monomer binds to the replacement base PreQ1. The cofactor is Zn(2+).

The catalysed reaction is 7-aminomethyl-7-carbaguanine + guanosine(34) in tRNA = 7-aminomethyl-7-carbaguanosine(34) in tRNA + guanine. The protein operates within tRNA modification; tRNA-queuosine biosynthesis. Functionally, catalyzes the base-exchange of a guanine (G) residue with the queuine precursor 7-aminomethyl-7-deazaguanine (PreQ1) at position 34 (anticodon wobble position) in tRNAs with GU(N) anticodons (tRNA-Asp, -Asn, -His and -Tyr). Catalysis occurs through a double-displacement mechanism. The nucleophile active site attacks the C1' of nucleotide 34 to detach the guanine base from the RNA, forming a covalent enzyme-RNA intermediate. The proton acceptor active site deprotonates the incoming PreQ1, allowing a nucleophilic attack on the C1' of the ribose to form the product. After dissociation, two additional enzymatic reactions on the tRNA convert PreQ1 to queuine (Q), resulting in the hypermodified nucleoside queuosine (7-(((4,5-cis-dihydroxy-2-cyclopenten-1-yl)amino)methyl)-7-deazaguanosine). This is Queuine tRNA-ribosyltransferase from Rickettsia bellii (strain RML369-C).